A 542-amino-acid polypeptide reads, in one-letter code: Beta-fructofuranosidase, insoluble isoenzyme 5 (542 aa).

Residues 50–53, Gln-69, Trp-77, and 114–115 each bind substrate; these read WQND and WS. Residue Asp-53 is part of the active site. N-linked (GlcNAc...) asparagine glycosylation is present at Asn-142. Substrate contacts are provided by residues 178–179 and Glu-233; that span reads RD. Cys-389 and Cys-436 are disulfide-bonded. Residues Asn-510 and Asn-516 are each glycosylated (N-linked (GlcNAc...) asparagine).

This sequence belongs to the glycosyl hydrolase 32 family. As to expression, expressed in roots and leaves.

It is found in the secreted. The protein localises to the extracellular space. It localises to the apoplast. Its subcellular location is the cell wall. The catalysed reaction is Hydrolysis of terminal non-reducing beta-D-fructofuranoside residues in beta-D-fructofuranosides.. May play a role in stress response. The chain is Beta-fructofuranosidase, insoluble isoenzyme 5 (CIN5) from Oryza sativa subsp. japonica (Rice).